A 141-amino-acid polypeptide reads, in one-letter code: Large ribosomal subunit protein uL11 (141 aa).

Belongs to the universal ribosomal protein uL11 family. Part of the ribosomal stalk of the 50S ribosomal subunit. Interacts with L10 and the large rRNA to form the base of the stalk. L10 forms an elongated spine to which L12 dimers bind in a sequential fashion forming a multimeric L10(L12)X complex. In terms of processing, one or more lysine residues are methylated.

In terms of biological role, forms part of the ribosomal stalk which helps the ribosome interact with GTP-bound translation factors. This is Large ribosomal subunit protein uL11 from Kosmotoga olearia (strain ATCC BAA-1733 / DSM 21960 / TBF 19.5.1).